Consider the following 622-residue polypeptide: MSFKVNWNSLETEPLTNWTKELLTSALNSGKSPNILASNITIKDLNFGKIAPDFEILEIGELDRDRFRGIFKIDYQGDFHLTLHTKVQANPLNIYYHNSLEKEVCNCTQDEFITPNFLLSNEQFAIPLDLKLSDIKINGIGIIVFSKSKGLTLVFRNDPLDSIKVSSTFDTVQVLANFLQKQIENQIRDLFRETLPTLIHQLSLKYLSLDNNINEIKSKLSQQDSVSMTNNELASSLKLFDDEENEFPLIYSSKNLQKNMQLFKSRETFRLSVPKFKNIVQRTRLDKFTKSYPNLLNSLYANNVDLQHRYVNNINHNNNNNASSTGIPIELLLSHDDKQHYDKTDSLLKDISSIQANNFYKYSNKDAPTKPKRRRIKVHKKNKSKHDETTTTTSKPSELQNVDNTFMESRSISPQETIDTVSTLIESVPMTRNVSSNIKSPTLDTLSTGSSSAASSQVIAHPTPKRAYQPNDTTTAATTTLNKENHIDYIKARNLYQDFIQMSQSPGYYDKVISNGGGIGLGNNNGGNYFGLERTISSSPIKHLNKDKKSINYIDTSKINEKLNQFRFDGGKNNNTNDNNSKNFRPGFTRNESNGQQGILFEAFNFPSMTAAATPPPPPPYC.

One can recognise an SMP-LTD domain in the interval 1–204 (MSFKVNWNSL…LPTLIHQLSL (204 aa)). Disordered stretches follow at residues 362–399 (YSNK…PSEL) and 568–592 (FDGG…TRNE). A compositionally biased stretch (basic residues) spans 370-384 (KPKRRRIKVHKKNKS). The segment covering 390–399 (TTTTSKPSEL) has biased composition (polar residues). The segment covering 571 to 583 (GKNNNTNDNNSKN) has biased composition (low complexity).

Belongs to the MDM34 family. In terms of assembly, component of the ER-mitochondria encounter structure (ERMES) or MDM complex, composed of MMM1, MDM10, MDM12 and MDM34.

Its subcellular location is the mitochondrion outer membrane. Its function is as follows. Component of the ERMES/MDM complex, which serves as a molecular tether to connect the endoplasmic reticulum (ER) and mitochondria. Components of this complex are involved in the control of mitochondrial shape and protein biogenesis, and function in nonvesicular lipid trafficking between the ER and mitochondria. MDM34 is required for the interaction of the ER-resident membrane protein MMM1 and the outer mitochondrial membrane-resident beta-barrel protein MDM10. This chain is Mitochondrial distribution and morphology protein 34, found in Candida dubliniensis (strain CD36 / ATCC MYA-646 / CBS 7987 / NCPF 3949 / NRRL Y-17841) (Yeast).